The following is a 432-amino-acid chain: CLOCK-interacting pacemaker (432 aa).

Disordered regions lie at residues 71–98 and 194–315; these read ADSDKDSGFSDGSSECLSSAEQMESEDM and SYTK…SSPL. S246 is subject to Phosphoserine. Residues 272–283 are compositionally biased toward polar residues; it reads SPQTLQPVSSSH. Positions 364-395 form a coiled coil; sequence EITLKTKELIRQNQATQAELDQLKEQTQMFIE. The tract at residues 408–432 is disordered; that stretch reads LQASLTSGSSHSGSDLDTLSDHPDV. The segment covering 411-424 has biased composition (low complexity); it reads SLTSGSSHSGSDLD.

As to quaternary structure, interacts with CLOCK. Forms a ternary complex with the CLOCK-BMAL1 heterodimer. Interacts with CAD and HSPA5. In terms of tissue distribution, expressed in the heart, kidney and liver and shows a circadian oscillation in these tissues with a peak at circadian time 14 hours (at protein level). Expressed in the brain, including the suprachiasmatic nucleus (SCN) of the brain, and in multiple peripheral tissues such as heart, liver and kidney. Exhibits a circadian oscillation in the peripheral tissues with a peak at circadian time 14 hours.

The protein resides in the nucleus. It is found in the cytoplasm. It localises to the cytosol. In terms of biological role, transcriptional repressor which may act as a negative-feedback regulator of CLOCK-BMAL1 transcriptional activity in the circadian-clock mechanism. May stimulate BMAL1-dependent phosphorylation of CLOCK. However, the physiological relevance of these observations is unsure, since experiments in knockout mice showed that CIPC is not critially required for basic circadian clock. The chain is CLOCK-interacting pacemaker (Cipc) from Mus musculus (Mouse).